A 215-amino-acid polypeptide reads, in one-letter code: Glutathione S-transferase D6 (215 aa).

One can recognise a GST N-terminal domain in the interval 1–80; the sequence is MDLYNMSGSP…YLVEQYGKDD (80 aa). Residues serine 9, 50–52, and 64–66 each bind glutathione; these read HTI and ETR. Residues 86 to 206 form the GST C-terminal domain; sequence DPQKQALINQ…LARIQSAKKF (121 aa).

Belongs to the GST superfamily. Delta family. In terms of assembly, homodimer.

The enzyme catalyses RX + glutathione = an S-substituted glutathione + a halide anion + H(+). Functionally, conjugation of reduced glutathione to a wide number of exogenous and endogenous hydrophobic electrophiles. May be involved in detoxification. This chain is Glutathione S-transferase D6, found in Drosophila melanogaster (Fruit fly).